Reading from the N-terminus, the 100-residue chain is Co-chaperonin GroES (100 aa).

It belongs to the GroES chaperonin family. In terms of assembly, heptamer of 7 subunits arranged in a ring. Interacts with the chaperonin GroEL.

It is found in the cytoplasm. In terms of biological role, together with the chaperonin GroEL, plays an essential role in assisting protein folding. The GroEL-GroES system forms a nano-cage that allows encapsulation of the non-native substrate proteins and provides a physical environment optimized to promote and accelerate protein folding. GroES binds to the apical surface of the GroEL ring, thereby capping the opening of the GroEL channel. This is Co-chaperonin GroES from Mycolicibacterium paratuberculosis (strain ATCC BAA-968 / K-10) (Mycobacterium paratuberculosis).